The chain runs to 1237 residues: U3 small nucleolar RNA-associated protein 22 (1237 aa).

The interval 1–78 (MATSVKRKAS…TNTAATRHNG (78 aa)) is disordered. A phosphoserine mark is found at serine 10 and serine 58. At threonine 60 the chain carries Phosphothreonine. Polar residues predominate over residues 61–78 (SPESNEVATNTAATRHNG). Serine 64 carries the post-translational modification Phosphoserine.

This sequence belongs to the NRAP family. Interacts with snoRNA U3. Interacts with MPP10. Component of the ribosomal small subunit (SSU) processome composed of at least 40 protein subunits and snoRNA U3. Interacts with UBP10.

Its subcellular location is the nucleus. The protein localises to the nucleolus. In terms of biological role, involved in nucleolar processing of pre-18S ribosomal RNA and ribosome assembly. This Saccharomyces cerevisiae (strain ATCC 204508 / S288c) (Baker's yeast) protein is U3 small nucleolar RNA-associated protein 22 (UTP22).